The following is an 807-amino-acid chain: 1-phosphatidylinositol 4,5-bisphosphate phosphodiesterase delta-4 (807 aa).

The region spanning 16–124 (LLMQEGTMMR…WMRGLQLLVD (109 aa)) is the PH domain. A substrate binding region spans residues 26 to 53 (KVRTKSWKKLRYFRLQNDGMTVWHGSQP). EF-hand domains follow at residues 134-169 (QMDQMLNEWFQQADRNQDGRMSFREAQRLLLLMNVE), 170-205 (MDEEYAFSLFQEADVTQSDDLGSEEFVQFYKALTKR), and 203-237 (TKRTEIEEIFEDFSSDKQKLTLLEFVDFLRKEQKE). Positions 147, 149, 151, 153, 158, 183, 187, 189, and 194 each coordinate Ca(2+). A GBA motif is present at residues 213-243 (EDFSSDKQKLTLLEFVDFLRKEQKEKDHAPD). A PI-PLC X-box domain is found at 290–435 (QDMTQPLSHY…LRGKILVKGK (146 aa)). H305 is a catalytic residue. Ca(2+) is bound by residues N306, E335, and D337. H350 is an active-site residue. Residue E384 coordinates Ca(2+). Residues K433 and K435 each contribute to the substrate site. The disordered stretch occupies residues 442–490 (VDKEEEEEEEEEELEKDEGPDLDPASPELDTQPQPETQGQAAGNKKERK). Positions 443-462 (DKEEEEEEEEEELEKDEGPD) are enriched in acidic residues. Residues 470 to 482 (LDTQPQPETQGQA) are compositionally biased toward polar residues. The 117-residue stretch at 538–654 (LSALVVYLRT…GYVLKPEFLR (117 aa)) folds into the PI-PLC Y-box domain. Residues S567 and R594 each coordinate substrate. One can recognise a C2 domain in the interval 654–781 (RDTQSSFNPE…QGYRHVSLLS (128 aa)). Residues D697, N721, D750, and Y751 each contribute to the Ca(2+) site. The PDZ-binding motif lies at 776-779 (HVSL).

In terms of assembly, interacts with GRIP1. Interacts (via GBA motif) with guanine nucleotide-binding protein G(i) alpha subunit GNAI3 (inactive GDP-bound form)l low-affinity interaction. Ca(2+) serves as cofactor.

The protein localises to the membrane. It localises to the nucleus. The protein resides in the cytoplasm. Its subcellular location is the endoplasmic reticulum. It carries out the reaction a 1,2-diacyl-sn-glycero-3-phospho-(1D-myo-inositol-4,5-bisphosphate) + H2O = 1D-myo-inositol 1,4,5-trisphosphate + a 1,2-diacyl-sn-glycerol + H(+). The enzyme catalyses a 1,2-diacyl-sn-glycero-3-phospho-(1D-myo-inositol) + H2O = 1D-myo-inositol 1-phosphate + a 1,2-diacyl-sn-glycerol + H(+). Hydrolyzes the phosphatidylinositol 4,5-bisphosphate (PIP2) to generate 2 second messenger molecules diacylglycerol (DAG) and inositol 1,4,5-trisphosphate (IP3). DAG mediates the activation of protein kinase C (PKC), while IP3 releases Ca(2+) from intracellular stores. Required for acrosome reaction in sperm during fertilization, probably by acting as an important enzyme for intracellular Ca(2+) mobilization in the zona pellucida-induced acrosome reaction. May play a role in cell growth. Modulates the liver regeneration in cooperation with nuclear PKC. Overexpression up-regulates the Erk signaling pathway and proliferation. The sequence is that of 1-phosphatidylinositol 4,5-bisphosphate phosphodiesterase delta-4 from Mus musculus (Mouse).